The sequence spans 90 residues: Small ribosomal subunit protein bS16 (90 aa).

Belongs to the bacterial ribosomal protein bS16 family.

The protein is Small ribosomal subunit protein bS16 of Lactococcus lactis subsp. cremoris (strain MG1363).